A 101-amino-acid chain; its full sequence is Large ribosomal subunit protein uL24 (101 aa).

It belongs to the universal ribosomal protein uL24 family. Part of the 50S ribosomal subunit.

One of two assembly initiator proteins, it binds directly to the 5'-end of the 23S rRNA, where it nucleates assembly of the 50S subunit. Functionally, one of the proteins that surrounds the polypeptide exit tunnel on the outside of the subunit. The chain is Large ribosomal subunit protein uL24 from Clostridioides difficile (strain 630) (Peptoclostridium difficile).